The sequence spans 540 residues: BTB/POZ domain-containing protein 6-A (540 aa).

The BTB domain occupies 138-208 (ADVHFIVGPP…MYSDEIELAP (71 aa)).

In terms of assembly, interacts with cul3. Interacts (via BTB domain) with zbtb16/plzf. As to expression, expressed in the developing central nervous system.

It localises to the cytoplasm. It is found in the nucleus. Functionally, adapter protein for the cul3 E3 ubiquitin-protein ligase complex. Promotes the export of zbtb16/plzf from the nucleus to the cytoplasm and targets zbtb16/plzf for ubiquitination and degradation. Up-regulates neurog1 expression and antagonizes zbtb16/plzf, to promote neurogenesis. In Danio rerio (Zebrafish), this protein is BTB/POZ domain-containing protein 6-A (btbd6a).